We begin with the raw amino-acid sequence, 1080 residues long: DNA-directed RNA polymerase subunit beta C-terminal section (1080 aa).

The protein belongs to the RNA polymerase beta chain family. In terms of assembly, in plastids the minimal PEP RNA polymerase catalytic core is composed of four subunits: alpha, beta, beta', and beta''. When a (nuclear-encoded) sigma factor is associated with the core the holoenzyme is formed, which can initiate transcription.

Its subcellular location is the plastid. It localises to the chloroplast. It carries out the reaction RNA(n) + a ribonucleoside 5'-triphosphate = RNA(n+1) + diphosphate. Its function is as follows. DNA-dependent RNA polymerase catalyzes the transcription of DNA into RNA using the four ribonucleoside triphosphates as substrates. In Stigeoclonium helveticum (Green alga), this protein is DNA-directed RNA polymerase subunit beta C-terminal section (rpoB2).